Consider the following 302-residue polypeptide: Sodium/potassium-transporting ATPase subunit beta-233 (302 aa).

The Cytoplasmic segment spans residues 1-30 (MSGNKDSDGGWKTFIWNSEKKELLGRTGCS). Residues 31–51 (WFKILLFYVIFYGCLAAVFVG) traverse the membrane as a helical; Signal-anchor for type II membrane protein segment. Residues 52–302 (TIQALLLTLS…FDIKITVNDS (251 aa)) are Extracellular-facing. Intrachain disulfides connect Cys125–Cys148 and Cys158–Cys174. 2 N-linked (GlcNAc...) asparagine glycosylation sites follow: Asn193 and Asn263. A disulfide bridge links Cys213 with Cys274.

The protein belongs to the X(+)/potassium ATPases subunit beta family. As to quaternary structure, the sodium/potassium-transporting ATPase is composed of a catalytic alpha subunit, an auxiliary non-catalytic beta subunit and an additional regulatory subunit. In terms of processing, glycosylated. As to expression, expressed mainly in epithelial tissues.

The protein resides in the cell membrane. This is the non-catalytic component of the active enzyme, which catalyzes the hydrolysis of ATP coupled with the exchange of Na(+) and K(+) ions across the plasma membrane. The beta subunit regulates, through assembly of alpha/beta heterodimers, the number of sodium pumps transported to the plasma membrane. The polypeptide is Sodium/potassium-transporting ATPase subunit beta-233 (Anguilla anguilla (European freshwater eel)).